Here is a 737-residue protein sequence, read N- to C-terminus: MAKQVFQTTFAGRELIVETGQVAKQANGSVVVRYGESTVLTAAVMSKKMATGDFFPLQVNYEEKMYAAGKFPGGFMKREGRPSTDATLTARLIDRPIRPMFAEGFRNEVQVINTVLSYDENASAPMAAMFGSSLALSISDIPFDGPIAGVQVGYVDGQIIINPSQEQAEQSLLELTVAGTKHAINMVESGAKELSEEIMLEALLKGHEAVKELIAFQEEIVAAVGKEKAEVELLHVDAELQAEIIAAYNSDLQKAVQVEEKLAREAATQAVKDQVTAVYEEKYANHEEFDRIMRDVAEILEQMEHAEVRRLITEDKVRPDGRKVDEIRPLDAVVDFLPRVHGSGLFTRGQTQALSVLTLAPMGETQIIDGLDPEYKKRFMHHYNFPQYSVGETGRYGAPGRREIGHGALGERALAQVLPSLEEFPYAIRLVAEVLESNGSSSQASICAGTLALMAGGVPIKAPVAGIAMGLISDGNNYTVLTDIQGLEDHFGDMDFKVAGTRDGITALQMDIKIQGITAEILTEALAQAKKARFEILDVIEATIPEVRPELAPTAPKIDTIKIDVDKIKIVIGKGGETIDKIIAETGVKIDIDEEGNVSIYSSDQDAINRAKEIIAGLVREAKVDEVYRAKVVRIEKFGAFVNLFDKTDALVHISEMAWTRTNRVEDLVEIGDEVDVKVIKIDEKGRIDASMKALLPRPPKPEHDEKGEKSERPHRPRHHKDHKPKKEFTETPKDSE.

Positions 489 and 495 each coordinate Mg(2+). The region spanning Pro-556–Ile-615 is the KH domain. The S1 motif domain occupies Asp-625–Lys-693. The disordered stretch occupies residues Ser-691–Glu-737. Residues Pro-700–Pro-714 are compositionally biased toward basic and acidic residues. The span at His-715–Lys-724 shows a compositional bias: basic residues. The span at Pro-725–Glu-737 shows a compositional bias: basic and acidic residues.

The protein belongs to the polyribonucleotide nucleotidyltransferase family. The cofactor is Mg(2+).

The protein resides in the cytoplasm. It catalyses the reaction RNA(n+1) + phosphate = RNA(n) + a ribonucleoside 5'-diphosphate. Involved in mRNA degradation. Catalyzes the phosphorolysis of single-stranded polyribonucleotides processively in the 3'- to 5'-direction. This is Polyribonucleotide nucleotidyltransferase from Streptococcus pneumoniae (strain 70585).